The chain runs to 260 residues: 33 kDa inner dynein arm light chain, axonemal (260 aa).

Residues 1 to 66 (MIPPNASLVK…PVESQKAQQT (66 aa)) form a disordered region. Residues 177–260 (MRKALQAEQG…LEGIIAPNKK (84 aa)) adopt a coiled-coil conformation.

It belongs to the inner dynein arm light chain family. May undergo some post-translational modifications that shift its mobility on SDS gels.

Its function is as follows. May play a dynamic role in flagellar motility. This is 33 kDa inner dynein arm light chain, axonemal from Strongylocentrotus purpuratus (Purple sea urchin).